The sequence spans 317 residues: HTH-type transcriptional repressor PA14_22550 (317 aa).

Residues 1–59 form the HTH lysR-type domain; it reads MDKLTAMATFVKVVDAGSFTRAADALGLPKARVSQRVSDLEKHLGVRLLNRTTRALSLT. Residues 19–38 constitute a DNA-binding region (H-T-H motif); the sequence is FTRAADALGLPKARVSQRVS.

The protein belongs to the LysR transcriptional regulatory family.

Functionally, represses the transcription of the operon that consists of PA14_22510 to PA14_22540. The chain is HTH-type transcriptional repressor PA14_22550 from Pseudomonas aeruginosa (strain UCBPP-PA14).